The chain runs to 274 residues: 2,3,4,5-tetrahydropyridine-2,6-dicarboxylate N-succinyltransferase (274 aa).

Substrate contacts are provided by Arg-104 and Asp-141.

This sequence belongs to the transferase hexapeptide repeat family. In terms of assembly, homotrimer.

The protein localises to the cytoplasm. It catalyses the reaction (S)-2,3,4,5-tetrahydrodipicolinate + succinyl-CoA + H2O = (S)-2-succinylamino-6-oxoheptanedioate + CoA. The protein operates within amino-acid biosynthesis; L-lysine biosynthesis via DAP pathway; LL-2,6-diaminopimelate from (S)-tetrahydrodipicolinate (succinylase route): step 1/3. The protein is 2,3,4,5-tetrahydropyridine-2,6-dicarboxylate N-succinyltransferase of Yersinia enterocolitica serotype O:8 / biotype 1B (strain NCTC 13174 / 8081).